The chain runs to 495 residues: 3-octaprenyl-4-hydroxybenzoate carboxy-lyase (495 aa).

N172 contributes to the Mn(2+) binding site. Prenylated FMN is bound by residues 175 to 177 (IYR), 189 to 191 (RWL), and 194 to 195 (RG). Residue E238 participates in Mn(2+) binding. The active-site Proton donor is D287.

It belongs to the UbiD family. In terms of assembly, homohexamer. It depends on prenylated FMN as a cofactor. Mn(2+) is required as a cofactor.

The protein resides in the cell membrane. The catalysed reaction is a 4-hydroxy-3-(all-trans-polyprenyl)benzoate + H(+) = a 2-(all-trans-polyprenyl)phenol + CO2. It functions in the pathway cofactor biosynthesis; ubiquinone biosynthesis. In terms of biological role, catalyzes the decarboxylation of 3-octaprenyl-4-hydroxy benzoate to 2-octaprenylphenol, an intermediate step in ubiquinone biosynthesis. The chain is 3-octaprenyl-4-hydroxybenzoate carboxy-lyase from Yersinia enterocolitica serotype O:8 / biotype 1B (strain NCTC 13174 / 8081).